A 78-amino-acid polypeptide reads, in one-letter code: Large ribosomal subunit protein eL38 (78 aa).

Belongs to the eukaryotic ribosomal protein eL38 family. Component of the large ribosomal subunit (LSU). Mature yeast ribosomes consist of a small (40S) and a large (60S) subunit. The 40S small subunit contains 1 molecule of ribosomal RNA (18S rRNA) and 33 different proteins (encoded by 57 genes). The large 60S subunit contains 3 rRNA molecules (25S, 5.8S and 5S rRNA) and 46 different proteins (encoded by 81 genes).

It is found in the cytoplasm. In terms of biological role, component of the ribosome, a large ribonucleoprotein complex responsible for the synthesis of proteins in the cell. The small ribosomal subunit (SSU) binds messenger RNAs (mRNAs) and translates the encoded message by selecting cognate aminoacyl-transfer RNA (tRNA) molecules. The large subunit (LSU) contains the ribosomal catalytic site termed the peptidyl transferase center (PTC), which catalyzes the formation of peptide bonds, thereby polymerizing the amino acids delivered by tRNAs into a polypeptide chain. The nascent polypeptides leave the ribosome through a tunnel in the LSU and interact with protein factors that function in enzymatic processing, targeting, and the membrane insertion of nascent chains at the exit of the ribosomal tunnel. In Saccharomyces cerevisiae (strain ATCC 204508 / S288c) (Baker's yeast), this protein is Large ribosomal subunit protein eL38.